A 136-amino-acid chain; its full sequence is Protein LITTLE ZIPPER 1 (136 aa).

The stretch at 97–122 (ENQNIIRENEKLKKKALLLHQENKTL) forms a coiled coil.

Interacts with REV. Expressed in the adaxial epidermis of the cotyledons and in the vascular cylinder of wild-type torpedo stage embryos.

Its function is as follows. Competitive inhibitor of the HD-ZIPIII transcription factors in shoot apical meristem (SAM) development. Acts by forming non-functional heterodimers. Part of a negative feedback loop. Essential for proper functioning of stem cells in the SAM. The chain is Protein LITTLE ZIPPER 1 from Arabidopsis thaliana (Mouse-ear cress).